The primary structure comprises 409 residues: Argininosuccinate synthase (409 aa).

Residues A13–S21 and A40 each bind ATP. Residues Y91 and S96 each coordinate L-citrulline. G121 provides a ligand contact to ATP. L-aspartate is bound by residues T123, N127, and D128. N127 serves as a coordination point for L-citrulline. Residues R131, S183, S192, E268, and Y280 each coordinate L-citrulline.

Belongs to the argininosuccinate synthase family. Type 1 subfamily. Homotetramer.

The protein localises to the cytoplasm. The enzyme catalyses L-citrulline + L-aspartate + ATP = 2-(N(omega)-L-arginino)succinate + AMP + diphosphate + H(+). It functions in the pathway amino-acid biosynthesis; L-arginine biosynthesis; L-arginine from L-ornithine and carbamoyl phosphate: step 2/3. This Saccharophagus degradans (strain 2-40 / ATCC 43961 / DSM 17024) protein is Argininosuccinate synthase.